The chain runs to 336 residues: tRNA(Ile)-lysidine synthase (336 aa).

21-26 (SGGLDS) lines the ATP pocket.

The protein belongs to the tRNA(Ile)-lysidine synthase family.

The protein localises to the cytoplasm. The catalysed reaction is cytidine(34) in tRNA(Ile2) + L-lysine + ATP = lysidine(34) in tRNA(Ile2) + AMP + diphosphate + H(+). Ligates lysine onto the cytidine present at position 34 of the AUA codon-specific tRNA(Ile) that contains the anticodon CAU, in an ATP-dependent manner. Cytidine is converted to lysidine, thus changing the amino acid specificity of the tRNA from methionine to isoleucine. The polypeptide is tRNA(Ile)-lysidine synthase (Helicobacter pylori (strain ATCC 700392 / 26695) (Campylobacter pylori)).